The following is a 676-amino-acid chain: DNA ligase (676 aa).

Residues 39 to 43 (DYVYD), 88 to 91 (SLND), and Glu-118 contribute to the NAD(+) site. The active-site N6-AMP-lysine intermediate is Lys-120. NAD(+) is bound by residues Arg-141, Glu-175, Lys-291, and Lys-315. Zn(2+) contacts are provided by Cys-409, Cys-412, Cys-427, and Cys-432. The BRCT domain occupies 595–676 (EVESPFKDKT…MVDALDASHF (82 aa)).

The protein belongs to the NAD-dependent DNA ligase family. LigA subfamily. The cofactor is Mg(2+). Requires Mn(2+) as cofactor.

It carries out the reaction NAD(+) + (deoxyribonucleotide)n-3'-hydroxyl + 5'-phospho-(deoxyribonucleotide)m = (deoxyribonucleotide)n+m + AMP + beta-nicotinamide D-nucleotide.. DNA ligase that catalyzes the formation of phosphodiester linkages between 5'-phosphoryl and 3'-hydroxyl groups in double-stranded DNA using NAD as a coenzyme and as the energy source for the reaction. It is essential for DNA replication and repair of damaged DNA. This Enterococcus faecalis (strain ATCC 700802 / V583) protein is DNA ligase.